We begin with the raw amino-acid sequence, 330 residues long: Peroxidase 42 (330 aa).

An N-terminal signal peptide occupies residues 1-23 (MGGKGVMMVAILCLWALSATSEA). Disulfide bonds link C40–C119, C73–C78, C125–C323, and C204–C231. The active-site Proton acceptor is the H71. Ca(2+) contacts are provided by D72, V75, D79, and S81. Substrate is bound at residue P167. Residue N170 is glycosylated (N-linked (GlcNAc...) asparagine). Position 197 (H197) interacts with heme b. S198 is a binding site for Ca(2+). Ca(2+) contacts are provided by D247, T250, and D255.

This sequence belongs to the peroxidase family. Classical plant (class III) peroxidase subfamily. Requires heme b as cofactor. Ca(2+) is required as a cofactor. In terms of tissue distribution, constitutively expressed in the whole plant, with the highest expression in roots.

The protein localises to the secreted. The catalysed reaction is 2 a phenolic donor + H2O2 = 2 a phenolic radical donor + 2 H2O. Functionally, removal of H(2)O(2), oxidation of toxic reductants, biosynthesis and degradation of lignin, suberization, auxin catabolism, response to environmental stresses such as wounding, pathogen attack and oxidative stress. These functions might be dependent on each isozyme/isoform in each plant tissue. Its function is as follows. Might function as heat shock-like defense protein. The chain is Peroxidase 42 (PER42) from Arabidopsis thaliana (Mouse-ear cress).